The following is a 702-amino-acid chain: Vacuolar protein sorting-associated protein 52 homolog (702 aa).

The stretch at 505 to 535 (KEMGAKMEAVLENSEDSIEQLLTRMSAMQQT) forms a coiled coil.

The protein belongs to the VPS52 family. In terms of assembly, component of the Golgi-associated retrograde protein (GARP) complex, also called VFT (VPS fifty-three) complex, composed of vps-51, vps-52, vps-53 and vps-54. Within the complex interacts with vps-53 and vps-54. Interacts with the small GTPases rab-6.1 and rab-6.2. In terms of tissue distribution, ubiquitously expressed, with particularly strong expression in neuronal cells. Specifically expressed in head and tail neurons and in the pharynx and ventral cord motor neurons.

The protein localises to the golgi apparatus. It localises to the trans-Golgi network. Its subcellular location is the perikaryon. It is found in the cytoplasm. The protein resides in the perinuclear region. In terms of biological role, acts as a component of the GARP complex that is involved in retrograde transport from early and late endosomes to the trans-Golgi network (TGN). The GARP complex facilitates tethering as well as SNARE complex assembly at the Golgi. Plays a role in the trafficking of cargo to dense-core vesicles, probably through association with the EARP-interacting protein eipr-1. Important for neuronal function. In Caenorhabditis elegans, this protein is Vacuolar protein sorting-associated protein 52 homolog.